The sequence spans 547 residues: Chaperonin GroEL (547 aa).

ATP contacts are provided by residues Thr30–Pro33, Lys51, Asp87–Thr91, Gly415, Asn479–Ala481, and Asp495.

This sequence belongs to the chaperonin (HSP60) family. As to quaternary structure, forms a cylinder of 14 subunits composed of two heptameric rings stacked back-to-back. Interacts with the co-chaperonin GroES.

It localises to the cytoplasm. It carries out the reaction ATP + H2O + a folded polypeptide = ADP + phosphate + an unfolded polypeptide.. Together with its co-chaperonin GroES, plays an essential role in assisting protein folding. The GroEL-GroES system forms a nano-cage that allows encapsulation of the non-native substrate proteins and provides a physical environment optimized to promote and accelerate protein folding. The polypeptide is Chaperonin GroEL (Pseudomonas syringae pv. tomato (strain ATCC BAA-871 / DC3000)).